Reading from the N-terminus, the 488-residue chain is Protein Notchless (488 aa).

Residues 1-22 (MLAKKQKMQETDTEQEATPHTI) form a disordered region. A ubiquitin-like (UBL) domain region spans residues 19-101 (PHTIQARLVS…VIDIVYQPQA (83 aa)). 8 WD repeats span residues 117 to 156 (GHAE…PHFT), 159 to 198 (GHKQ…QKGR), 202 to 246 (GHKK…CLMN), 249 to 287 (GHTN…LCRT), 329 to 370 (LQES…CVER), 373 to 412 (GHQN…YMAT), 415 to 454 (GHVQ…LAQE), and 457 to 488 (GHAD…LWAY).

This sequence belongs to the NLE1/RSA4 family. In terms of assembly, interacts with Notch (via cytoplasmic domain). Associates with the pre-60S ribosomal particle.

It localises to the nucleus. The protein resides in the nucleolus. Its function is as follows. Plays a role in regulating Notch activity. The polypeptide is Protein Notchless (Drosophila melanogaster (Fruit fly)).